A 232-amino-acid chain; its full sequence is 5'-methylthioadenosine/S-adenosylhomocysteine nucleosidase (232 aa).

Glutamate 12 functions as the Proton acceptor in the catalytic mechanism. Substrate is bound by residues glycine 78, isoleucine 152, and 173–174; that span reads ME. Catalysis depends on aspartate 197, which acts as the Proton donor.

It belongs to the PNP/UDP phosphorylase family. MtnN subfamily. In terms of assembly, homodimer.

It catalyses the reaction S-adenosyl-L-homocysteine + H2O = S-(5-deoxy-D-ribos-5-yl)-L-homocysteine + adenine. The catalysed reaction is S-methyl-5'-thioadenosine + H2O = 5-(methylsulfanyl)-D-ribose + adenine. It carries out the reaction 5'-deoxyadenosine + H2O = 5-deoxy-D-ribose + adenine. Its pathway is amino-acid biosynthesis; L-methionine biosynthesis via salvage pathway; S-methyl-5-thio-alpha-D-ribose 1-phosphate from S-methyl-5'-thioadenosine (hydrolase route): step 1/2. Catalyzes the irreversible cleavage of the glycosidic bond in both 5'-methylthioadenosine (MTA) and S-adenosylhomocysteine (SAH/AdoHcy) to adenine and the corresponding thioribose, 5'-methylthioribose and S-ribosylhomocysteine, respectively. Also cleaves 5'-deoxyadenosine, a toxic by-product of radical S-adenosylmethionine (SAM) enzymes, into 5-deoxyribose and adenine. Thus, is required for in vivo function of the radical SAM enzymes biotin synthase and lipoic acid synthase, that are inhibited by 5'-deoxyadenosine accumulation. The chain is 5'-methylthioadenosine/S-adenosylhomocysteine nucleosidase from Klebsiella pneumoniae subsp. pneumoniae (strain ATCC 700721 / MGH 78578).